Consider the following 151-residue polypeptide: Ribonuclease P protein component (151 aa).

The disordered stretch occupies residues 1-62 (MDEKDLATQP…LKGDSAFRRL (62 aa)). Low complexity predominate over residues 28-48 (GAQGAEAQAAEGPLAAHAQGA).

This sequence belongs to the RnpA family. Consists of a catalytic RNA component (M1 or rnpB) and a protein subunit.

It carries out the reaction Endonucleolytic cleavage of RNA, removing 5'-extranucleotides from tRNA precursor.. Functionally, RNaseP catalyzes the removal of the 5'-leader sequence from pre-tRNA to produce the mature 5'-terminus. It can also cleave other RNA substrates such as 4.5S RNA. The protein component plays an auxiliary but essential role in vivo by binding to the 5'-leader sequence and broadening the substrate specificity of the ribozyme. The sequence is that of Ribonuclease P protein component from Thermus oshimai.